A 184-amino-acid chain; its full sequence is Ribose 1,5-bisphosphate phosphokinase PhnN (184 aa).

An ATP-binding site is contributed by 11-18; it reads GPSGAGKD.

It belongs to the ribose 1,5-bisphosphokinase family.

The catalysed reaction is alpha-D-ribose 1,5-bisphosphate + ATP = 5-phospho-alpha-D-ribose 1-diphosphate + ADP. Its pathway is metabolic intermediate biosynthesis; 5-phospho-alpha-D-ribose 1-diphosphate biosynthesis; 5-phospho-alpha-D-ribose 1-diphosphate from D-ribose 5-phosphate (route II): step 3/3. In terms of biological role, catalyzes the phosphorylation of ribose 1,5-bisphosphate to 5-phospho-D-ribosyl alpha-1-diphosphate (PRPP). This Burkholderia pseudomallei (strain K96243) protein is Ribose 1,5-bisphosphate phosphokinase PhnN.